The sequence spans 282 residues: MRITQILLCLVIVALSSSSHVWSDQIFPAHLVGTFSRNNREPKYKIEFLPEDSPFHPGDNLESMVMLDKHGNRFLCYLPKEEKATSGWTSSQQNISTVMMETQQLVKLKTPDELLQPLSEKCLFRQEGWWSYEFCHQKYVRQLHVEDENKIVQEFFLGTFDPEATAAFNQTVSDASTDASQRYHSHVYTNGTTCDLTGSPREVEVRFVCAETRAMVTSITELSTCKYALTVQCPTLCKHPLFQLEKPVSHTIHCNAIPVEEDATRNKEEQAVDESPKMIADS.

The first 23 residues, 1 to 23, serve as a signal peptide directing secretion; it reads MRITQILLCLVIVALSSSSHVWS. Residue Asn-94 is glycosylated (N-linked (GlcNAc...) asparagine). One can recognise an MRH domain in the interval 120–239; that stretch reads EKCLFRQEGW…TVQCPTLCKH (120 aa). A disulfide bridge links Cys-122 with Cys-135. Residues Trp-129, Trp-130, and Gln-142 each coordinate a mannooligosaccharide derivative. Asn-169 and Asn-190 each carry an N-linked (GlcNAc...) asparagine glycan. 2 disulfides stabilise this stretch: Cys-194-Cys-225 and Cys-209-Cys-237. The a mannooligosaccharide derivative site is built by Asp-195, Arg-201, Glu-221, and Tyr-227. Residues 262–276 are compositionally biased toward basic and acidic residues; that stretch reads DATRNKEEQAVDESP. A disordered region spans residues 262-282; that stretch reads DATRNKEEQAVDESPKMIADS.

Belongs to the OS-9 family. Interacts with HRD3A.

It localises to the endoplasmic reticulum. Its function is as follows. Lectin which functions in endoplasmic reticulum (ER) quality control and ER-associated degradation (ERAD). May bind terminally misfolded non-glycosylated proteins as well as improperly folded glycoproteins, retain them in the ER, and possibly transfer them to the ubiquitination machinery and promote their degradation. Targets the misfolded LRR receptor kinase BRI1 and the misfolded receptor-like kinase EFR. The polypeptide is Protein OS-9 homolog (Arabidopsis thaliana (Mouse-ear cress)).